A 263-amino-acid polypeptide reads, in one-letter code: Shikimate dehydrogenase (NADP(+)) (263 aa).

Residues 16 to 18 and Thr65 contribute to the shikimate site; that span reads SKS. The Proton acceptor role is filled by Lys69. Shikimate-binding residues include Asn90 and Asp105. NADP(+) is bound by residues 125 to 129, Ser181, and Leu208; that span reads GAGGS. Residue Tyr210 participates in shikimate binding. Position 230 (Gly230) interacts with NADP(+). Gln237 lines the shikimate pocket.

It belongs to the shikimate dehydrogenase family. As to quaternary structure, homodimer.

It catalyses the reaction shikimate + NADP(+) = 3-dehydroshikimate + NADPH + H(+). Its pathway is metabolic intermediate biosynthesis; chorismate biosynthesis; chorismate from D-erythrose 4-phosphate and phosphoenolpyruvate: step 4/7. Involved in the biosynthesis of the chorismate, which leads to the biosynthesis of aromatic amino acids. Catalyzes the reversible NADPH linked reduction of 3-dehydroshikimate (DHSA) to yield shikimate (SA). The protein is Shikimate dehydrogenase (NADP(+)) of Helicobacter pylori (strain ATCC 700392 / 26695) (Campylobacter pylori).